We begin with the raw amino-acid sequence, 461 residues long: Phosphoenolpyruvate carboxylase (461 aa).

This sequence belongs to the PEPCase type 2 family. Homotetramer. Mg(2+) is required as a cofactor.

The enzyme catalyses oxaloacetate + phosphate = phosphoenolpyruvate + hydrogencarbonate. Functionally, catalyzes the irreversible beta-carboxylation of phosphoenolpyruvate (PEP) to form oxaloacetate (OAA), a four-carbon dicarboxylic acid source for the tricarboxylic acid cycle. This is Phosphoenolpyruvate carboxylase from Pyrobaculum islandicum (strain DSM 4184 / JCM 9189 / GEO3).